Consider the following 142-residue polypeptide: Hemoglobin subunit alpha-A (142 aa).

Residues 2–142 (VLSANDKTNV…VGNVLTAKYR (141 aa)) form the Globin domain. Position 59 (H59) interacts with O2. H88 provides a ligand contact to heme b.

The protein belongs to the globin family. As to quaternary structure, heterotetramer of two alpha chains and two beta chains. In terms of tissue distribution, red blood cells.

Functionally, involved in oxygen transport from the lung to the various peripheral tissues. This chain is Hemoglobin subunit alpha-A (HBAA), found in Aquila chrysaetos (Golden eagle).